A 135-amino-acid polypeptide reads, in one-letter code: Nucleoside diphosphate kinase (135 aa).

Positions 10, 58, 86, 92, 103, and 113 each coordinate ATP. Residue histidine 116 is the Pros-phosphohistidine intermediate of the active site.

Belongs to the NDK family. In terms of assembly, homotetramer. Mg(2+) serves as cofactor.

Its subcellular location is the cytoplasm. The enzyme catalyses a 2'-deoxyribonucleoside 5'-diphosphate + ATP = a 2'-deoxyribonucleoside 5'-triphosphate + ADP. It carries out the reaction a ribonucleoside 5'-diphosphate + ATP = a ribonucleoside 5'-triphosphate + ADP. Major role in the synthesis of nucleoside triphosphates other than ATP. The ATP gamma phosphate is transferred to the NDP beta phosphate via a ping-pong mechanism, using a phosphorylated active-site intermediate. This Nocardioides sp. (strain ATCC BAA-499 / JS614) protein is Nucleoside diphosphate kinase.